The sequence spans 306 residues: Curved DNA-binding protein (306 aa).

The 65-residue stretch at 5-69 (DYYAIMGVKP…QRRAEYDQLW (65 aa)) folds into the J domain.

Its subcellular location is the cytoplasm. It localises to the nucleoid. DNA-binding protein that preferentially recognizes a curved DNA sequence. It is probably a functional analog of DnaJ; displays overlapping activities with DnaJ, but functions under different conditions, probably acting as a molecular chaperone in an adaptive response to environmental stresses other than heat shock. Lacks autonomous chaperone activity; binds native substrates and targets them for recognition by DnaK. Its activity is inhibited by the binding of CbpM. The polypeptide is Curved DNA-binding protein (Salmonella choleraesuis (strain SC-B67)).